A 588-amino-acid chain; its full sequence is Adenine deaminase (588 aa).

It belongs to the metallo-dependent hydrolases superfamily. Adenine deaminase family. In terms of assembly, homodimer. It depends on Mn(2+) as a cofactor.

The catalysed reaction is adenine + H2O + H(+) = hypoxanthine + NH4(+). This Escherichia coli O157:H7 (strain EC4115 / EHEC) protein is Adenine deaminase.